The sequence spans 208 residues: Small ribosomal subunit protein uS4 (208 aa).

The S4 RNA-binding domain occupies 95–155 (TRLDALVLRA…AKSQTMVPFQ (61 aa)).

The protein belongs to the universal ribosomal protein uS4 family. Part of the 30S ribosomal subunit. Contacts protein S5. The interaction surface between S4 and S5 is involved in control of translational fidelity.

Its function is as follows. One of the primary rRNA binding proteins, it binds directly to 16S rRNA where it nucleates assembly of the body of the 30S subunit. Functionally, with S5 and S12 plays an important role in translational accuracy. This is Small ribosomal subunit protein uS4 from Bifidobacterium adolescentis (strain ATCC 15703 / DSM 20083 / NCTC 11814 / E194a).